The chain runs to 704 residues: Meprin A subunit beta (704 aa).

An N-terminal signal peptide occupies residues 1-20 (MDARHQPWFLVFATFLLVSG). The propeptide occupies 21–64 (LPAPEKFVKDIDGGIDQDIFDINQGLGLDLFEGDIKLEANGKNS). Residues 21–654 (LPAPEKFVKD…RCEKRGSTRD (634 aa)) are Extracellular-facing. Positions 63 to 257 (NSIIGDHKRW…LKLNQLYNCT (195 aa)) constitute a Peptidase M12A domain. 3 disulfides stabilise this stretch: C104/C256, C125/C145, and C266/C428. Residue H153 participates in Zn(2+) binding. E154 is an active-site residue. Residues H157 and H163 each contribute to the Zn(2+) site. N193, N219, N255, N316, N422, N437, N529, N548, and N593 each carry an N-linked (GlcNAc...) asparagine glycan. Positions 261 to 430 (SFMDSCDFEL…INLSETRCPH (170 aa)) constitute an MAM domain. Positions 431–586 (HIWHIQNFTQ…GDDIYILLTV (156 aa)) constitute an MATH domain. Residues 607-647 (VHNACSEVVCQNGGICVVQDGRAECKCPAGEDWWYMGKRCE) form the EGF-like domain. Intrachain disulfides connect C611/C622, C616/C631, and C633/C646. A helical transmembrane segment spans residues 655–678 (TVIIAVSSTVTVFAVMLIITLVSV). Over 679–704 (YCTRRKYRKKARANTAAMTLENQHAF) the chain is Cytoplasmic. T697 carries the post-translational modification Phosphothreonine.

As to quaternary structure, homotetramer consisting of disulfide-linked beta subunits, or heterotetramer of two alpha and two beta subunits formed by non-covalent association of two disulfide-linked heterodimers. Interacts with MBL2 through its carbohydrate moiety. This interaction may inhibit its catalytic activity. Interacts with TSPAN8. It depends on Zn(2+) as a cofactor. Proteolytically activated by trypsin in the intestinal lumen and kallikrein-related peptidases in other tissues. In terms of processing, N-glycosylated; contains high mannose and/or complex biantennary structures. Post-translationally, phosphorylated by PKC at multiple sites of its cytoplasmic part. Phosphorylation dcreases activity at the cell surface, leading to diminished substrate cleavage. In terms of tissue distribution, isoform 1 is expressed in kidney, intestinal brush borders, and salivary ducts. Isoform 2 has been found in carcinoma cells.

The protein resides in the cell membrane. It is found in the secreted. It carries out the reaction Hydrolysis of proteins, including azocasein, and peptides. Hydrolysis of 5-His-|-Leu-6, 6-Leu-|-Cys-7, 14-Ala-|-Leu-15 and 19-Cys-|-Gly-20 bonds in insulin B chain.. Its activity is regulated as follows. Strongly inhibited by fetuin-A/AHSG. Inhibited by cysteine and by the metal ion chelators EDTA and 1,10-phenanthroline. Not inhibited by 3,4-dichloroisocourmarin, soybean trypsin inhibitor, or the cysteine proteinase inhibitors iodoacetic acid and E-64. In terms of biological role, membrane metallopeptidase that sheds many membrane-bound proteins. Exhibits a strong preference for acidic amino acids at the P1' position. Known substrates include: FGF19, VGFA, IL1B, IL18, procollagen I and III, E-cadherin, KLK7, gastrin, ADAM10, tenascin-C. The presence of several pro-inflammatory cytokine among substrates implicate MEP1B in inflammation. It is also involved in tissue remodeling due to its capability to degrade extracellular matrix components. The protein is Meprin A subunit beta (Mep1b) of Mus musculus (Mouse).